The chain runs to 75 residues: Exodeoxyribonuclease 7 small subunit (75 aa).

This sequence belongs to the XseB family. Heterooligomer composed of large and small subunits.

It is found in the cytoplasm. The catalysed reaction is Exonucleolytic cleavage in either 5'- to 3'- or 3'- to 5'-direction to yield nucleoside 5'-phosphates.. In terms of biological role, bidirectionally degrades single-stranded DNA into large acid-insoluble oligonucleotides, which are then degraded further into small acid-soluble oligonucleotides. This is Exodeoxyribonuclease 7 small subunit from Anaplasma phagocytophilum (strain HZ).